Reading from the N-terminus, the 146-residue chain is Acidic phospholipase A2 S14-72F (146 aa).

Residues 1–19 form the signal peptide; sequence MYPAHLLVLLAVCVSLLGA. Positions 20–27 are excised as a propeptide; sequence ASIPPQPL. 7 cysteine pairs are disulfide-bonded: C38-C98, C54-C145, C56-C72, C71-C126, C78-C119, C87-C112, and C105-C117. 3 residues coordinate Ca(2+): Y55, G57, and G59. H75 is a catalytic residue. D76 is a Ca(2+) binding site. The active site involves D120.

The protein belongs to the phospholipase A2 family. Group I subfamily. D49 sub-subfamily. It depends on Ca(2+) as a cofactor. As to expression, expressed by the venom gland.

The protein resides in the secreted. It carries out the reaction a 1,2-diacyl-sn-glycero-3-phosphocholine + H2O = a 1-acyl-sn-glycero-3-phosphocholine + a fatty acid + H(+). In terms of biological role, snake venom phospholipase A2 (PLA2) that inhibits collagen-induced platelet aggregation. PLA2 catalyzes the calcium-dependent hydrolysis of the 2-acyl groups in 3-sn-phosphoglycerides. The polypeptide is Acidic phospholipase A2 S14-72F (Austrelaps superbus (Lowland copperhead snake)).